The sequence spans 162 residues: Phospholipase A and acyltransferase 3 (162 aa).

Over 1-133 (MLAPIPEPKP…VPRSDQVRDA (133 aa)) the chain is Cytoplasmic. Residues 13–129 (LIEIFRPMYR…LRYGVPRSDQ (117 aa)) form the LRAT domain. Catalysis depends on residues H23 and H35. C113 functions as the Acyl-thioester intermediate in the catalytic mechanism. Residues 134–154 (VKAVGIAGVGLAALGLVGVML) traverse the membrane as a helical segment. The Lumenal portion of the chain corresponds to 155–162 (SRNKKQKQ).

It belongs to the H-rev107 family. As to quaternary structure, interacts with PPP2R1A; this interaction might decrease PP2A activity. Ubiquitously expressed in normal tissues but down-regulated in primary carcinomas or in many cell lines derived from tumors. Highly expressed in white adipose tissue and in adipocytes. Expressed at lower levels in brown adipose tissue.

The protein localises to the cell membrane. The protein resides in the cytoplasm. Its subcellular location is the cytosol. It localises to the perinuclear region. It is found in the peroxisome membrane. The protein localises to the mitochondrion membrane. The protein resides in the nucleus envelope. Its subcellular location is the lysosome membrane. It localises to the endoplasmic reticulum membrane. It carries out the reaction a 1,2-diacyl-sn-glycero-3-phosphocholine + H2O = a 1-acyl-sn-glycero-3-phosphocholine + a fatty acid + H(+). It catalyses the reaction a 1,2-diacyl-sn-glycero-3-phosphocholine + H2O = a 2-acyl-sn-glycero-3-phosphocholine + a fatty acid + H(+). The catalysed reaction is 1,2-dihexadecanoyl-sn-glycero-3-phosphocholine + H2O = 1-hexadecanoyl-sn-glycero-3-phosphocholine + hexadecanoate + H(+). The enzyme catalyses 1,2-dihexadecanoyl-sn-glycero-3-phosphocholine + H2O = 2-hexadecanoyl-sn-glycero-3-phosphocholine + hexadecanoate + H(+). It carries out the reaction 1-hexadecanoyl-2-(9Z-octadecenoyl)-sn-glycero-3-phosphocholine + H2O = 2-(9Z-octadecenoyl)-sn-glycero-3-phosphocholine + hexadecanoate + H(+). It catalyses the reaction 1-hexadecanoyl-2-(9Z-octadecenoyl)-sn-glycero-3-phosphocholine + H2O = 1-hexadecanoyl-sn-glycero-3-phosphocholine + (9Z)-octadecenoate + H(+). The catalysed reaction is 1-hexadecanoyl-2-(5Z,8Z,11Z,14Z-eicosatetraenoyl)-sn-glycero-3-phosphocholine + H2O = 1-hexadecanoyl-sn-glycero-3-phosphocholine + (5Z,8Z,11Z,14Z)-eicosatetraenoate + H(+). The enzyme catalyses 1-hexadecanoyl-2-(5Z,8Z,11Z,14Z-eicosatetraenoyl)-sn-glycero-3-phosphocholine + H2O = 2-(5Z,8Z,11Z,14Z)-eicosatetraenoyl-sn-glycero-3-phosphocholine + hexadecanoate + H(+). It carries out the reaction 1-hexadecanoyl-2-(9Z,12Z-octadecadienoyl)-sn-glycero-3-phosphoethanolamine + H2O = 1-hexadecanoyl-sn-glycero-3-phosphoethanolamine + (9Z,12Z)-octadecadienoate + H(+). It catalyses the reaction 1-hexadecanoyl-2-(9Z,12Z-octadecadienoyl)-sn-glycero-3-phosphoethanolamine + H2O = 2-(9Z,12Z)-octadecadienoyl-sn-glycero-3-phosphoethanolamine + hexadecanoate + H(+). The catalysed reaction is 1-hexadecanoyl-2-(5Z,8Z,11Z,14Z-eicosatetraenoyl)-sn-glycero-3-phosphoethanolamine + H2O = 1-hexadecanoyl-sn-glycero-3-phosphoethanolamine + (5Z,8Z,11Z,14Z)-eicosatetraenoate + H(+). The enzyme catalyses 1-hexadecanoyl-2-(5Z,8Z,11Z,14Z-eicosatetraenoyl)-sn-glycero-3-phosphoethanolamine + H2O = 2-(5Z,8Z,11Z,14Z)-eicosatetraenoyl-sn-glycero-3-phosphoethanolamine + hexadecanoate + H(+). It carries out the reaction 1-hexanoyl-2-acyl-sn-glycero-3-phosphocholine + H2O = hexanoate + a 2-acyl-sn-glycero-3-phosphocholine + H(+). It catalyses the reaction 1-hexanoyl-2-acyl-sn-glycero-3-phosphocholine + H2O = 1-hexanoyl-sn-glycero-3-phosphocholine + a fatty acid + H(+). The catalysed reaction is 1,2-diheptadecanoyl-sn-glycero-3-phosphoethanolamine + 1-(9Z-octadecenoyl)-2-hexadecanoyl-sn-glycero-3-phosphocholine = 1,2-diheptadecanoyl-sn-glycero-3-phospho-N-hexadecanoyl-ethanolamine + 1-(9Z-octadecenoyl)-sn-glycero-3-phosphocholine + H(+). The enzyme catalyses 1,2-diheptadecanoyl-sn-glycero-3-phosphoethanolamine + 1-(9Z-octadecenoyl)-2-hexadecanoyl-sn-glycero-3-phosphocholine = 1,2-diheptadecanoyl-sn-glycero-3-phospho-N-(9Z-octadecenoyl)-ethanolamine + 2-hexadecanoyl-sn-glycero-3-phosphocholine + H(+). It carries out the reaction 1,2-dihexanoyl-sn-glycero-3-phosphoethanolamine + 2-heptanoyl-sn-glycero-3-phosphocholine = hexanoyl-sn-glycero-3-phosphoethanolamine + 1-hexanoyl-2-heptanoyl-sn-glycero-3-phosphocholine. It catalyses the reaction 1-hexadecanoyl-2-octadecanoyl-sn-glycero-3-phosphocholine + H2O = octadecanoate + 1-hexadecanoyl-sn-glycero-3-phosphocholine + H(+). The catalysed reaction is 1-hexadecanoyl-2-octadecanoyl-sn-glycero-3-phosphocholine + H2O = 2-octadecanoyl-sn-glycero-3-phosphocholine + hexadecanoate + H(+). The enzyme catalyses 1-octadecanoyl-2-hexadecanoyl-sn-glycero-3-phosphocholine + H2O = 1-octadecanoyl-sn-glycero-3-phosphocholine + hexadecanoate + H(+). It carries out the reaction 1-octadecanoyl-2-hexadecanoyl-sn-glycero-3-phosphocholine + H2O = 2-hexadecanoyl-sn-glycero-3-phosphocholine + octadecanoate + H(+). It catalyses the reaction 1-hexadecanoyl-2-(9Z,12Z-octadecadienoyl)-sn-glycero-3-phosphocholine + H2O = (9Z,12Z)-octadecadienoate + 1-hexadecanoyl-sn-glycero-3-phosphocholine + H(+). The catalysed reaction is 1-hexadecanoyl-2-(9Z,12Z-octadecadienoyl)-sn-glycero-3-phosphocholine + H2O = 2-(9Z,12Z-octadecadienoyl)-sn-glycero-3-phosphocholine + hexadecanoate + H(+). The enzyme catalyses 1,2-di-(9Z-octadecenoyl)-sn-glycero-3-phosphocholine + H2O = 2-(9Z-octadecenoyl)-sn-glycero-3-phosphocholine + (9Z)-octadecenoate + H(+). It carries out the reaction 1,2-dihexadecanoyl-sn-glycero-3-phosphocholine + H2O = hexadecanoyl-sn-glycero-3-phosphocholine + hexadecanoate + H(+). It catalyses the reaction 1,2-di-(9Z-octadecenoyl)-sn-glycero-3-phosphocholine + H2O = 1-(9Z-octadecenoyl)-sn-glycero-3-phosphocholine + (9Z)-octadecenoate + H(+). The catalysed reaction is 1,2-di-(9Z-octadecenoyl)-sn-glycero-3-phosphoethanolamine + 1,2-dihexadecanoyl-sn-glycero-3-phosphocholine = hexadecanoyl-sn-glycero-3-phosphocholine + N-hexadecanoyl-1,2-di-(9Z-octadecenoyl)-sn-glycero-3-phosphoethanolamine + H(+). The enzyme catalyses 1,2-di-(9Z,12Z-octadecadienoyl)-sn-glycero-3-phosphocholine + H2O = 1-(9Z,12Z)-octadecadienoyl-sn-glycero-3-phosphocholine + (9Z,12Z)-octadecadienoate + H(+). Exhibits both phospholipase A1/2 and acyltransferase activities. Shows phospholipase A1 (PLA1) and A2 (PLA2), catalyzing the calcium-independent release of fatty acids from the sn-1 or sn-2 position of glycerophospholipids. For most substrates, PLA1 activity is much higher than PLA2 activity. Shows O-acyltransferase activity, catalyzing the transfer of a fatty acyl group from glycerophospholipid to the hydroxyl group of lysophospholipid. Shows N-acyltransferase activity,catalyzing the calcium-independent transfer of a fatty acyl group at the sn-1 position of phosphatidylcholine (PC) and other glycerophospholipids to the primary amine of phosphatidylethanolamine (PE), forming N-acylphosphatidylethanolamine (NAPE), which serves as precursor for N-acylethanolamines (NAEs). Exhibits high N-acyltransferase activity and low phospholipase A1/2 activity. Required for complete organelle rupture and degradation that occur during eye lens terminal differentiation, when fiber cells that compose the lens degrade all membrane-bound organelles in order to provide lens with transparency to allow the passage of light. Organelle membrane degradation is probably catalyzed by the phospholipase activity. Functionally, (Microbial infection) Acts as a host factor for picornaviruses: required during early infection to promote viral genome release into the cytoplasm. The protein is Phospholipase A and acyltransferase 3 of Mus musculus (Mouse).